A 337-amino-acid chain; its full sequence is 5-formaminoimidazole-4-carboxamide-1-(beta)-D-ribofuranosyl 5'-monophosphate synthetase (337 aa).

The 5-amino-1-(5-phospho-beta-D-ribosyl)imidazole-4-carboxamide site is built by H14 and S74. One can recognise an ATP-grasp domain in the interval 81–328 (VELVERMKVP…IAREIRLAIE (248 aa)). Residues 125 to 185 (PDDI…VPVY) and E207 each bind ATP. 5-amino-1-(5-phospho-beta-D-ribosyl)imidazole-4-carboxamide is bound at residue N235. Mg(2+) is bound by residues E273 and E286.

The protein belongs to the phosphohexose mutase family. It depends on Mg(2+) as a cofactor. Mn(2+) is required as a cofactor.

The enzyme catalyses 5-amino-1-(5-phospho-beta-D-ribosyl)imidazole-4-carboxamide + formate + ATP = 5-formamido-1-(5-phospho-D-ribosyl)imidazole-4-carboxamide + ADP + phosphate. Its pathway is purine metabolism; IMP biosynthesis via de novo pathway; 5-formamido-1-(5-phospho-D-ribosyl)imidazole-4-carboxamide from 5-amino-1-(5-phospho-D-ribosyl)imidazole-4-carboxamide (formate route): step 1/1. Its function is as follows. Catalyzes the ATP- and formate-dependent formylation of 5-aminoimidazole-4-carboxamide-1-beta-d-ribofuranosyl 5'-monophosphate (AICAR) to 5-formaminoimidazole-4-carboxamide-1-beta-d-ribofuranosyl 5'-monophosphate (FAICAR) in the absence of folates. This Pyrococcus abyssi (strain GE5 / Orsay) protein is 5-formaminoimidazole-4-carboxamide-1-(beta)-D-ribofuranosyl 5'-monophosphate synthetase.